Reading from the N-terminus, the 567-residue chain is uncharacterized protein (567 aa).

10 helical membrane-spanning segments follow: residues 65–85 (LSLFGIFSISFSVLGMLPSVA), 92–112 (LWYVGYPGLLWAWLIAMFFLI), 190–210 (WQWFLLAVAIQCFNCVLACLP), 220–240 (VATYLNTAFLFIAGITILAYG), 302–322 (AIVMTAVIGGVVGWIMQIIVA), 353–373 (LGILSLTIISAIIMGQSALIA), 412–432 (IISILILFLTFAGTVTLDAVF), 434–454 (VGAVAAFIAFTVPIAIRVFFT), 473–493 (IGLLAVSFVALMIPILCFPSV), and 503–523 (WTCLVYGGPMLFTLVWYAISA).

Belongs to the amino acid-polyamine-organocation (APC) superfamily.

The protein localises to the membrane. This is an uncharacterized protein from Schizosaccharomyces pombe (strain 972 / ATCC 24843) (Fission yeast).